Consider the following 116-residue polypeptide: Non-specific lipid-transfer protein 8 (116 aa).

The first 24 residues, 1–24 (MNVLKCLAIISVLGIFFIPRYSES), serve as a signal peptide directing secretion. 4 disulfide bridges follow: C28–C76, C38–C53, C54–C98, and C74–C112.

This sequence belongs to the plant LTP family.

Its function is as follows. Plant non-specific lipid-transfer proteins transfer phospholipids as well as galactolipids across membranes. May play a role in wax or cutin deposition in the cell walls of expanding epidermal cells and certain secretory tissues. The sequence is that of Non-specific lipid-transfer protein 8 (LTP8) from Arabidopsis thaliana (Mouse-ear cress).